Reading from the N-terminus, the 95-residue chain is uncharacterized protein (95 aa).

2 stretches are compositionally biased toward basic and acidic residues: residues 1–28 and 41–53; these read MRRA…KERC and DERV…KGRP. The tract at residues 1–73 is disordered; sequence MRRAEVKRSA…RTSRAGSSWQ (73 aa).

This is an uncharacterized protein from Homo sapiens (Human).